The following is a 437-amino-acid chain: MQLPRWWELGDPCAWTGQGRGTRRMSPATTGTFLLTVYSIFSKVHSDRNVYPSAGVLFVHVLEREYFKGEFPPYPKPGEISNDPITFNTNLMGYPDRPGWLRYIQRTPYSDGVLYGSPTAENVGKPTIIEITAYNRRTFETARHNLIINVMSAEDFPLPYQAEFFIKNMNVEEMLASEVLGDFLGAVKNVWQPERLNAINITSALDRGGRVPLPINDLKEGVYVMVGADVPFSSCLREVENPQNQLRCSQEMEPVITCDKKFRTQFYIDWCKISLVDKTKQVSTYQEVIRGEGILPDGGEYKPPSDSLKSRDYYTDFLITLAVPSAVALVLFLILAYIMCCRREGVEKRNMQTPDIQLVHHSAIQKSTKELRDMSKNREIAWPLSTLPVFHPVTGEMIPPLHTDNYDSTNMPLMQTQQNLPHQTQIPQQQTTGKWYP.

The Extracellular portion of the chain corresponds to 1–317; sequence MQLPRWWELG…LKSRDYYTDF (317 aa). Residue Asn-200 is glycosylated (N-linked (GlcNAc...) asparagine). The chain crosses the membrane as a helical span at residues 318-338; that stretch reads LITLAVPSAVALVLFLILAYI. Residues 339 to 437 lie on the Cytoplasmic side of the membrane; sequence MCCRREGVEK…QQQTTGKWYP (99 aa).

This sequence belongs to the sarcoglycan alpha/epsilon family. In terms of processing, N-glycosylated. Ubiquitinated, leading to its degradation by the proteasome.

Its subcellular location is the cell membrane. The protein localises to the sarcolemma. It is found in the cytoplasm. It localises to the cytoskeleton. The protein resides in the cell projection. Its subcellular location is the dendrite. The protein localises to the golgi apparatus. Its function is as follows. Component of the sarcoglycan complex, a subcomplex of the dystrophin-glycoprotein complex which forms a link between the F-actin cytoskeleton and the extracellular matrix. This chain is Epsilon-sarcoglycan, found in Pongo abelii (Sumatran orangutan).